Reading from the N-terminus, the 361-residue chain is KDEL-tailed cysteine endopeptidase CEP2 (361 aa).

The first 20 residues, 1–20 (MKKLLLIFLFSLVILQTACG), serve as a signal peptide directing secretion. Residues 21 to 127 (FDYDDKEIES…FMYDHENLSK (107 aa)) constitute a propeptide, activation peptide. N-linked (GlcNAc...) asparagine glycans are attached at residues Asn-75 and Asn-124. 3 disulfide bridges follow: Cys-149–Cys-191, Cys-183–Cys-224, and Cys-282–Cys-333. Cys-152 is a catalytic residue. Catalysis depends on residues His-288 and Asn-308. Residues 358 to 361 (KDEL) carry the Prevents secretion from ER motif.

Belongs to the peptidase C1 family. Expressed in roots, stems, rosette and cauline leaves, flowers, buds and green siliques. Found in the tip of young primary leaves, in very young root tips and at later stages in all tissues of lateral root, including the vascular bundle. Not expressed in lateral root primordia, while directly emerging through the epidermis.

The protein resides in the endoplasmic reticulum. In terms of biological role, involved in the final stage of developmental programmed cell death and in intercalation of new cells. Cleaves extensins, thus probably supporting the final cell collapse. In Arabidopsis thaliana (Mouse-ear cress), this protein is KDEL-tailed cysteine endopeptidase CEP2.